We begin with the raw amino-acid sequence, 59 residues long: UPF0434 protein COSY_0767 (59 aa).

The protein belongs to the UPF0434 family.

This is UPF0434 protein COSY_0767 from Vesicomyosocius okutanii subsp. Calyptogena okutanii (strain HA).